Consider the following 790-residue polypeptide: PAN2-PAN3 deadenylation complex subunit PAN3 (790 aa).

Disordered regions lie at residues 166-191 (IAQQQPQHPQKQQQHPPSVGGGAVSA) and 235-259 (AMISGAGPGEKSPPHGMTPHGASPI). Positions 168-191 (QQQPQHPQKQQQHPPSVGGGAVSA) are enriched in low complexity. The segment at 369–655 (DAAEAAQHAL…SVTDLMPMIG (287 aa)) is pseudokinase domain. Residues arginine 423, 472 to 479 (DYHPGSQT), and 552 to 553 (TK) each bind ATP. The stretch at 656 to 694 (ARFYTQLDALQSKIDMQEDELAKEMENGRLYRILVKLNS) forms a coiled coil. The knob domain stretch occupies residues 695 to 790 (INERPDFNLD…FSELMSSAAN (96 aa)).

Belongs to the protein kinase superfamily. PAN3 family. Homodimer. Forms a heterotrimer with a catalytic subunit PAN2 to form the poly(A)-nuclease (PAN) deadenylation complex. Interacts (via PAM-2 motif) with poly(A)-binding protein (via PABC domain), conferring substrate specificity of the enzyme complex. Interacts with the GW182 family protein gw. Interacts with Gyf.

Its subcellular location is the cytoplasm. The protein resides in the P-body. Its function is as follows. Regulatory subunit of the poly(A)-nuclease (PAN) deadenylation complex, one of two cytoplasmic mRNA deadenylases involved in general and miRNA-mediated mRNA turnover. PAN specifically shortens poly(A) tails of RNA and the activity is stimulated by poly(A)-binding protein (PABP). PAN deadenylation is followed by rapid degradation of the shortened mRNA tails by the CCR4-NOT complex. Deadenylated mRNAs are then degraded by two alternative mechanisms, namely exosome-mediated 3'-5' exonucleolytic degradation, or deadenylation-dependent mRNA decaping and subsequent 5'-3' exonucleolytic degradation by XRN1. PAN3 acts as a positive regulator for PAN activity, recruiting the catalytic subunit PAN2 to mRNA via its interaction with RNA and PABP, and to miRNA targets via its interaction with GW182 family proteins. This Drosophila melanogaster (Fruit fly) protein is PAN2-PAN3 deadenylation complex subunit PAN3.